The following is a 647-amino-acid chain: 1-deoxy-D-xylulose-5-phosphate synthase (647 aa).

Thiamine diphosphate contacts are provided by residues His79 and 120-122; that span reads GHA. Residue Asp152 participates in Mg(2+) binding. Thiamine diphosphate-binding positions include 153-154, Asn181, Phe293, and Glu377; that span reads GS. A Mg(2+)-binding site is contributed by Asn181.

Belongs to the transketolase family. DXPS subfamily. As to quaternary structure, homodimer. Mg(2+) serves as cofactor. Thiamine diphosphate is required as a cofactor.

It carries out the reaction D-glyceraldehyde 3-phosphate + pyruvate + H(+) = 1-deoxy-D-xylulose 5-phosphate + CO2. The protein operates within metabolic intermediate biosynthesis; 1-deoxy-D-xylulose 5-phosphate biosynthesis; 1-deoxy-D-xylulose 5-phosphate from D-glyceraldehyde 3-phosphate and pyruvate: step 1/1. Its function is as follows. Catalyzes the acyloin condensation reaction between C atoms 2 and 3 of pyruvate and glyceraldehyde 3-phosphate to yield 1-deoxy-D-xylulose-5-phosphate (DXP). This chain is 1-deoxy-D-xylulose-5-phosphate synthase, found in Bacteroides thetaiotaomicron (strain ATCC 29148 / DSM 2079 / JCM 5827 / CCUG 10774 / NCTC 10582 / VPI-5482 / E50).